The chain runs to 159 residues: Phosphopantetheine adenylyltransferase (159 aa).

Thr10 lines the substrate pocket. Residues 10-11 and His18 contribute to the ATP site; that span reads TF. Positions 42, 74, and 88 each coordinate substrate. ATP is bound by residues 89–91, Glu99, and 124–130; these read GLR and WSFISSS.

It belongs to the bacterial CoaD family. In terms of assembly, homohexamer. Mg(2+) serves as cofactor.

Its subcellular location is the cytoplasm. The catalysed reaction is (R)-4'-phosphopantetheine + ATP + H(+) = 3'-dephospho-CoA + diphosphate. It participates in cofactor biosynthesis; coenzyme A biosynthesis; CoA from (R)-pantothenate: step 4/5. Its function is as follows. Reversibly transfers an adenylyl group from ATP to 4'-phosphopantetheine, yielding dephospho-CoA (dPCoA) and pyrophosphate. The protein is Phosphopantetheine adenylyltransferase of Yersinia enterocolitica serotype O:8 / biotype 1B (strain NCTC 13174 / 8081).